Reading from the N-terminus, the 91-residue chain is Putative transmembrane protein encoded by LINC00862 (91 aa).

Residues 49–69 traverse the membrane as a helical segment; it reads IMALILMPSLHCFGNILILLF.

The protein localises to the membrane. The sequence is that of Putative transmembrane protein encoded by LINC00862 (LINC00862) from Homo sapiens (Human).